Reading from the N-terminus, the 539-residue chain is MSSTAENGDAVPGKQNEEKTYKKTASSAIKGAIQLGIGYTVGNLTSKPERDVLMQDFYVVESVFLPSEGSNLTPAHHYPDFRFKTYAPLAFRYFRELFGIKPDDYLYSICSEPLIELSNPGASGSLFFLTSDDEFIIKTVQHKEAEFLQKLLPGYYMNLNQNPRTLLPKFYGLYCMQSGGINIRIVVMNNVLPRAMRMHLTYDLKGSTYKRRASRKEREKPNPTFKDLDFLQDMHEGLYFDTETYNALMKTLQRDCRVLESFKIMDYSLLLGIHILDHSLKDKEEEPLQNVPDAKRPGMQKVLYSTAMESIQGPGKSADGIIAENPDTMGGIPAKSHKGEKLLLFMGIIDILQSYRLMKKLEHSWKALVYDGDTVSVHRPSFYADRFLKFMNSRVFKKIQALKASPSKKRCNSIAALKATSQEIVSSISQEWKDEKRDLLTEGQSFSSLDEEALGSRHRPDLVPSTPSLFEAASLATTISSSSLYVGEHYPHDRTTLYSNSKGLPSSSTFTLEEGTIYLTAEPNTLDLQDDASVLDVYL.

The segment at 1 to 21 is disordered; the sequence is MSSTAENGDAVPGKQNEEKTY. Positions 25-395 constitute a PIPK domain; it reads ASSAIKGAIQ…RFLKFMNSRV (371 aa). 3 positions are modified to phosphoserine: serine 445, serine 447, and serine 448.

Interacts with RAC1, AJUBA, PLD1, PLD2 and ARF1. Highly expressed in brain and testis. Barely detectable in liver and skeletal muscle.

The protein localises to the cytoplasm. The protein resides in the cytosol. It localises to the cell membrane. It is found in the endomembrane system. The enzyme catalyses a 1,2-diacyl-sn-glycero-3-phospho-(1D-myo-inositol 4-phosphate) + ATP = a 1,2-diacyl-sn-glycero-3-phospho-(1D-myo-inositol-4,5-bisphosphate) + ADP + H(+). The catalysed reaction is 1-octadecanoyl-2-(5Z,8Z,11Z,14Z)-eicosatetraenoyl-sn-glycero-3-phospho-1D-myo-inositol 4-phosphate + ATP = 1-octadecanoyl-2-(5Z,8Z,11Z,14Z)-eicosatetraenoyl-sn-glycero-3-phospho-1D-myo-inositol 4,5-bisphosphate + ADP + H(+). It carries out the reaction 1-octadecanoyl-2-(9Z)-octadecenoyl-sn-glycero-3-phospho-1D-myo-inositol 4-phosphate + ATP = 1-octadecanoyl-2-(9Z)-octadecenoyl-sn-glycero-3-phospho-1D-myo-inositol 4,5-bisphosphate + ADP + H(+). It catalyses the reaction 1-octadecanoyl-2-(9Z)-octadecenoyl-sn-glycero-3-phospho-1D-myo-inositol + ATP = 1-octadecanoyl-2-(9Z)-octadecenoyl-sn-glycero-3-phospho-1D-myo-inositol 5-phosphate + ADP + H(+). The enzyme catalyses 1-octadecanoyl-2-(9Z,12Z)-octadecadienoyl-sn-glycero-3-phospho-1D-myo-inositol + ATP = 1-octadecanoyl-2-(9Z,12Z)-octadecadienoyl-sn-glycero-3-phospho-1D-myo-inositol 5-phosphate + ADP + H(+). The catalysed reaction is 1-octadecanoyl-2-(5Z,8Z,11Z,14Z-eicosatetraenoyl)-sn-glycero-3-phospho-(1D-myo-inositol) + ATP = 1-octadecanoyl-2-(5Z,8Z,11Z,14Z)-eicosatetraenoyl-sn-glycero-3-phospho-1D-myo-inositol 5-phosphate + ADP + H(+). It carries out the reaction 1,2-di-(9Z,12Z)-octadecadienoyl-sn-glycero-3-phospho-1D-myo-inositol + ATP = 1,2-di(9Z,12Z)-octadecadienoyl-sn-glycero-3-phospho-1D-myo-inositol 5-phosphate + ADP + H(+). Its activity is regulated as follows. Activated by phosphatidic acid. Catalyzes the phosphorylation of phosphatidylinositol 4-phosphate (PtdIns(4)P/PI4P) to form phosphatidylinositol 4,5-bisphosphate (PtdIns(4,5)P2/PIP2), a lipid second messenger that regulates several cellular processes such as signal transduction, vesicle trafficking, actin cytoskeleton dynamics, cell adhesion, and cell motility. PtdIns(4,5)P2 can directly act as a second messenger or can be utilized as a precursor to generate other second messengers: inositol 1,4,5-trisphosphate (IP3), diacylglycerol (DAG) or phosphatidylinositol-3,4,5-trisphosphate (PtdIns(3,4,5)P3/PIP3). Mediates RAC1-dependent reorganization of actin filaments. Contributes to the activation of phospholipase PLD2. Together with PIP5K1A, is required, after stimulation by G-protein coupled receptors, for the synthesis of IP3 that will induce stable platelet adhesion. The protein is Phosphatidylinositol 4-phosphate 5-kinase type-1 beta of Mus musculus (Mouse).